The sequence spans 539 residues: Chaperonin GroEL (539 aa).

ATP contacts are provided by residues 29 to 32 (TLGP), 86 to 90 (DGTTT), glycine 412, 475 to 477 (NAA), and aspartate 491.

This sequence belongs to the chaperonin (HSP60) family. In terms of assembly, forms a cylinder of 14 subunits composed of two heptameric rings stacked back-to-back. Interacts with the co-chaperonin GroES.

Its subcellular location is the cytoplasm. It carries out the reaction ATP + H2O + a folded polypeptide = ADP + phosphate + an unfolded polypeptide.. Its function is as follows. Together with its co-chaperonin GroES, plays an essential role in assisting protein folding. The GroEL-GroES system forms a nano-cage that allows encapsulation of the non-native substrate proteins and provides a physical environment optimized to promote and accelerate protein folding. In Tsukamurella tyrosinosolvens, this protein is Chaperonin GroEL.